We begin with the raw amino-acid sequence, 273 residues long: 6-carboxyhexanoate--CoA ligase (273 aa).

This sequence belongs to the BioW family. As to quaternary structure, homodimer. Mg(2+) is required as a cofactor.

The enzyme catalyses heptanedioate + ATP + CoA = 6-carboxyhexanoyl-CoA + AMP + diphosphate. It functions in the pathway metabolic intermediate metabolism; pimeloyl-CoA biosynthesis; pimeloyl-CoA from pimelate: step 1/1. Catalyzes the transformation of pimelate into pimeloyl-CoA with concomitant hydrolysis of ATP to AMP. This chain is 6-carboxyhexanoate--CoA ligase, found in Alkalihalophilus pseudofirmus (strain ATCC BAA-2126 / JCM 17055 / OF4) (Bacillus pseudofirmus).